A 305-amino-acid chain; its full sequence is tRNA dimethylallyltransferase (305 aa).

8-15 (GPTGTGKS) provides a ligand contact to ATP. 10–15 (TGTGKS) lines the substrate pocket.

The protein belongs to the IPP transferase family. As to quaternary structure, monomer. Mg(2+) is required as a cofactor.

It carries out the reaction adenosine(37) in tRNA + dimethylallyl diphosphate = N(6)-dimethylallyladenosine(37) in tRNA + diphosphate. In terms of biological role, catalyzes the transfer of a dimethylallyl group onto the adenine at position 37 in tRNAs that read codons beginning with uridine, leading to the formation of N6-(dimethylallyl)adenosine (i(6)A). In Mycobacterium sp. (strain JLS), this protein is tRNA dimethylallyltransferase.